The chain runs to 123 residues: Small ribosomal subunit protein uS11 (123 aa).

Belongs to the universal ribosomal protein uS11 family. Part of the 30S ribosomal subunit. Interacts with proteins S7 and S18. Binds to IF-3.

Functionally, located on the platform of the 30S subunit, it bridges several disparate RNA helices of the 16S rRNA. Forms part of the Shine-Dalgarno cleft in the 70S ribosome. This Coxiella burnetii (strain CbuK_Q154) (Coxiella burnetii (strain Q154)) protein is Small ribosomal subunit protein uS11.